We begin with the raw amino-acid sequence, 228 residues long: MADS-box transcription factor 22 (228 aa).

The MADS-box domain maps to 1–61; that stretch reads MARERREIKR…GKLSHFASSS (61 aa). The region spanning 86–176 is the K-box domain; the sequence is LNLEHSKYAH…RNQVSQISPA (91 aa). The tract at residues 189-217 is disordered; sequence EGQSSESVMTALHSGSSQSQDNDDGSDVS.

As to expression, expressed in palea and stamen primordia. Expressed in shoots and coleoptiles.

Its subcellular location is the nucleus. Functionally, probable transcription factor. May be required for spikelet (rice flower) development. Transcription factor that functions to support the MADS55 in its function as negative regulator of brassinosteroid signaling. This chain is MADS-box transcription factor 22 (MADS22), found in Oryza sativa subsp. japonica (Rice).